The chain runs to 365 residues: tRNA 2-selenouridine synthase (365 aa).

Positions 16–138 (FLLKTPLIDL…LRRYLINVID (123 aa)) constitute a Rhodanese domain. Cysteine 98 serves as the catalytic S-selanylcysteine intermediate.

It belongs to the SelU family. As to quaternary structure, monomer.

It carries out the reaction 5-methylaminomethyl-2-thiouridine(34) in tRNA + selenophosphate + (2E)-geranyl diphosphate + H2O + H(+) = 5-methylaminomethyl-2-selenouridine(34) in tRNA + (2E)-thiogeraniol + phosphate + diphosphate. The catalysed reaction is 5-methylaminomethyl-2-thiouridine(34) in tRNA + (2E)-geranyl diphosphate = 5-methylaminomethyl-S-(2E)-geranyl-thiouridine(34) in tRNA + diphosphate. The enzyme catalyses 5-methylaminomethyl-S-(2E)-geranyl-thiouridine(34) in tRNA + selenophosphate + H(+) = 5-methylaminomethyl-2-(Se-phospho)selenouridine(34) in tRNA + (2E)-thiogeraniol. It catalyses the reaction 5-methylaminomethyl-2-(Se-phospho)selenouridine(34) in tRNA + H2O = 5-methylaminomethyl-2-selenouridine(34) in tRNA + phosphate. In terms of biological role, involved in the post-transcriptional modification of the uridine at the wobble position (U34) of tRNA(Lys), tRNA(Glu) and tRNA(Gln). Catalyzes the conversion of 2-thiouridine (S2U-RNA) to 2-selenouridine (Se2U-RNA). Acts in a two-step process involving geranylation of 2-thiouridine (S2U) to S-geranyl-2-thiouridine (geS2U) and subsequent selenation of the latter derivative to 2-selenouridine (Se2U) in the tRNA chain. The sequence is that of tRNA 2-selenouridine synthase from Psychromonas ingrahamii (strain DSM 17664 / CCUG 51855 / 37).